The sequence spans 258 residues: Axonemal dynein light intermediate polypeptide 1 (258 aa).

Disordered stretches follow at residues 1-60 (MIPP…CVPD) and 202-231 (DLERQVNEQKAKCEATEKRESERRQVEEKK). Residues 176 to 255 (MRKALQAEQG…LKAQLEGIIA (80 aa)) adopt a coiled-coil conformation.

This sequence belongs to the inner dynein arm light chain family. Interacts with CFAP45. Interacts with DYNC1H1.

The protein resides in the cell projection. The protein localises to the cilium. It is found in the flagellum. It localises to the dynein axonemal particle. Its subcellular location is the cytoplasm. Involved in sperm flagellum assembly. The chain is Axonemal dynein light intermediate polypeptide 1 from Rattus norvegicus (Rat).